Consider the following 169-residue polypeptide: ATP synthase subunit b (169 aa).

Residues 11 to 31 form a helical membrane-spanning segment; sequence KLPLGNMLFIIISFLVLMVIL.

This sequence belongs to the ATPase B chain family. F-type ATPases have 2 components, F(1) - the catalytic core - and F(0) - the membrane proton channel. F(1) has five subunits: alpha(3), beta(3), gamma(1), delta(1), epsilon(1). F(0) has three main subunits: a(1), b(2) and c(10-14). The alpha and beta chains form an alternating ring which encloses part of the gamma chain. F(1) is attached to F(0) by a central stalk formed by the gamma and epsilon chains, while a peripheral stalk is formed by the delta and b chains.

Its subcellular location is the cell membrane. F(1)F(0) ATP synthase produces ATP from ADP in the presence of a proton or sodium gradient. F-type ATPases consist of two structural domains, F(1) containing the extramembraneous catalytic core and F(0) containing the membrane proton channel, linked together by a central stalk and a peripheral stalk. During catalysis, ATP synthesis in the catalytic domain of F(1) is coupled via a rotary mechanism of the central stalk subunits to proton translocation. Functionally, component of the F(0) channel, it forms part of the peripheral stalk, linking F(1) to F(0). The protein is ATP synthase subunit b of Leuconostoc citreum (strain KM20).